The primary structure comprises 379 residues: Chaperone protein DnaJ (379 aa).

One can recognise a J domain in the interval 5–70; it reads DYYEVLGVEK…QKRAAYDQYG (66 aa). A CR-type zinc finger spans residues 133-211; that stretch reads GKSVEIRVPT…CHGQGRVEKT (79 aa). Cysteine 146, cysteine 149, cysteine 163, cysteine 166, cysteine 185, cysteine 188, cysteine 199, and cysteine 202 together coordinate Zn(2+). CXXCXGXG motif repeat units lie at residues 146–153, 163–170, 185–192, and 199–206; these read CDTCDGSG, CTTCHGQG, CPTCGGKG, and CDVCHGQG.

This sequence belongs to the DnaJ family. Homodimer. Zn(2+) is required as a cofactor.

It is found in the cytoplasm. In terms of biological role, participates actively in the response to hyperosmotic and heat shock by preventing the aggregation of stress-denatured proteins and by disaggregating proteins, also in an autonomous, DnaK-independent fashion. Unfolded proteins bind initially to DnaJ; upon interaction with the DnaJ-bound protein, DnaK hydrolyzes its bound ATP, resulting in the formation of a stable complex. GrpE releases ADP from DnaK; ATP binding to DnaK triggers the release of the substrate protein, thus completing the reaction cycle. Several rounds of ATP-dependent interactions between DnaJ, DnaK and GrpE are required for fully efficient folding. Also involved, together with DnaK and GrpE, in the DNA replication of plasmids through activation of initiation proteins. This chain is Chaperone protein DnaJ, found in Pseudoalteromonas atlantica (strain T6c / ATCC BAA-1087).